Here is an 835-residue protein sequence, read N- to C-terminus: MGFWMAMLLMLLLCLWVSCGIASVSYDHKAIIVNGQRKILISGSIHYPRSTPEMWPDLIQKAKEGGVDVIQTYVFWNGHEPEEGKYYFEERYDLVKFIKVVQEAGLYVHLRIGPYACAEWNFGGFPVWLKYVPGISFRTNNEPFKAAMQKFTTKIVDMMKAEKLYETQGGPIILSQIENEYGPMEWELGEPGKVYSEWAAKMAVDLGTGVPWIMCKQDDVPDPIINTCNGFYCDYFTPNKANKPKMWTEAWTAWFTEFGGPVPYRPAEDMAFAVARFIQTGGSFINYYMYHGGTNFGRTSGGPFIATSYDYDAPLDEFGSLRQPKWGHLKDLHRAIKLCEPALVSVDPTVTSLGNYQEARVFKSESGACAAFLANYNQHSFAKVAFGNMHYNLPPWSISILPDCKNTVYNTARVGAQSAQMKMTPVSRGFSWESFNEDAASHEDDTFTVVGLLEQINITRDVSDYLWYMTDIEIDPTEGFLNSGNWPWLTVFSAGHALHVFVNGQLAGTVYGSLENPKLTFSNGINLRAGVNKISLLSIAVGLPNVGPHFETWNAGVLGPVSLNGLNEGTRDLTWQKWFYKVGLKGEALSLHSLSGSPSVEWVEGSLVAQKQPLSWYKTTFNAPDGNEPLALDMNTMGKGQVWINGQSLGRHWPAYKSSGSCSVCNYTGWFDEKKCLTNCGEGSQRWYHVPRSWLYPTGNLLVVFEEWGGDPYGITLVKREIGSVCADIYEWQPQLLNWQRLVSGKFDRPLRPKAHLKCAPGQKISSIKFASFGTPEGVCGNFQQGSCHAPRSYDAFKKNCVGKESCSVQVTPENFGGDPCRNVLKKLSVEAICS.

An N-terminal signal peptide occupies residues 1-22 (MGFWMAMLLMLLLCLWVSCGIA). Glu180 functions as the Proton donor in the catalytic mechanism. Glu249 acts as the Nucleophile in catalysis. In terms of domain architecture, SUEL-type lectin spans 749–835 (RPLRPKAHLK…KKLSVEAICS (87 aa)).

Belongs to the glycosyl hydrolase 35 family.

It catalyses the reaction Hydrolysis of terminal non-reducing beta-D-galactose residues in beta-D-galactosides.. Involved in cell wall degradation. Degrades polysaccharides containing beta-(1--&gt;4)-linked galactans, acting as an exo-(1--&gt;4)-beta-D-galactanase. In Solanum lycopersicum (Tomato), this protein is Beta-galactosidase.